The chain runs to 208 residues: Kinetochore protein Spc25 (208 aa).

Residues 31-101 adopt a coiled-coil conformation; the sequence is SKIAAKHQLI…KKQRRDELMG (71 aa).

This sequence belongs to the SPC25 family. In terms of assembly, component of the Ndc80 complex, which is composed of Ndc80, Nuf2 and Spc25.

The protein resides in the nucleus. It localises to the chromosome. The protein localises to the centromere. Its subcellular location is the kinetochore. In terms of biological role, acts as a component of the essential kinetochore-associated Ndc80 complex, which is required for chromosome segregation and spindle checkpoint activity during meiosis and mitosis. Required for kinetochore integrity and the organization of stable microtubule binding sites in the outer plate of the kinetochore. Participates in SAC signaling that responds specifically to disruptions in spindle microtubule dynamics. The NDC80 complex synergistically enhances the affinity of the SKA1 complex for microtubules and may allow the NDC80 complex to track depolymerizing microtubules. In Drosophila mojavensis (Fruit fly), this protein is Kinetochore protein Spc25.